The following is a 289-amino-acid chain: ATP synthase gamma chain (289 aa).

It belongs to the ATPase gamma chain family. In terms of assembly, F-type ATPases have 2 components, CF(1) - the catalytic core - and CF(0) - the membrane proton channel. CF(1) has five subunits: alpha(3), beta(3), gamma(1), delta(1), epsilon(1). CF(0) has three main subunits: a, b and c.

It localises to the cell inner membrane. Its function is as follows. Produces ATP from ADP in the presence of a proton gradient across the membrane. The gamma chain is believed to be important in regulating ATPase activity and the flow of protons through the CF(0) complex. The chain is ATP synthase gamma chain from Coxiella burnetii (strain CbuG_Q212) (Coxiella burnetii (strain Q212)).